Consider the following 213-residue polypeptide: ATP-dependent dethiobiotin synthetase BioD (213 aa).

12 to 17 (NVGKTF) provides a ligand contact to ATP. T16 contributes to the Mg(2+) binding site. K36 is a catalytic residue. Substrate is bound at residue S40. ATP contacts are provided by residues D53, 110–113 (EGTG), and 170–171 (NQ). Residues D53 and E110 each contribute to the Mg(2+) site.

It belongs to the dethiobiotin synthetase family. Homodimer. Mg(2+) serves as cofactor.

The protein localises to the cytoplasm. It catalyses the reaction (7R,8S)-7,8-diammoniononanoate + CO2 + ATP = (4R,5S)-dethiobiotin + ADP + phosphate + 3 H(+). The protein operates within cofactor biosynthesis; biotin biosynthesis; biotin from 7,8-diaminononanoate: step 1/2. Functionally, catalyzes a mechanistically unusual reaction, the ATP-dependent insertion of CO2 between the N7 and N8 nitrogen atoms of 7,8-diaminopelargonic acid (DAPA, also called 7,8-diammoniononanoate) to form a ureido ring. The protein is ATP-dependent dethiobiotin synthetase BioD of Ruthia magnifica subsp. Calyptogena magnifica.